We begin with the raw amino-acid sequence, 802 residues long: Leucine--tRNA ligase (802 aa).

The 'HIGH' region motif lies at 40–51; that stretch reads PYPSGAGLHVGH. Positions 576-580 match the 'KMSKS' region motif; it reads KMSKS. An ATP-binding site is contributed by lysine 579.

Belongs to the class-I aminoacyl-tRNA synthetase family.

The protein localises to the cytoplasm. The enzyme catalyses tRNA(Leu) + L-leucine + ATP = L-leucyl-tRNA(Leu) + AMP + diphosphate. This is Leucine--tRNA ligase from Bacillus cereus (strain B4264).